The chain runs to 266 residues: Glucagon-1 (266 aa).

The first 20 residues, 1-20 (MKSTCYMIGILLMILQNTYQ), serve as a signal peptide directing secretion. 6 consecutive propeptides follow at residues 21-50 (SPVPETDANSRSVKAARNEAVDDSEQLKEV), 84-95 (SGELSRRNADYE), 136-140 (NAEFE), 175-178 (IRYS), 213-224 (NFSEVHSVEEMD), and 261-266 (DLLEEQ). Residues 23–32 (VPETDANSRS) show a composition bias toward polar residues. The interval 23-44 (VPETDANSRSVKAARNEAVDDS) is disordered.

Belongs to the glucagon family.

Its subcellular location is the secreted. Functionally, promotes hydrolysis of glycogen and lipids, and raises the blood sugar level. This chain is Glucagon-1 (gcg1), found in Xenopus laevis (African clawed frog).